The sequence spans 353 residues: S-adenosylmethionine:tRNA ribosyltransferase-isomerase (353 aa).

It belongs to the QueA family. As to quaternary structure, monomer.

The protein resides in the cytoplasm. It carries out the reaction 7-aminomethyl-7-carbaguanosine(34) in tRNA + S-adenosyl-L-methionine = epoxyqueuosine(34) in tRNA + adenine + L-methionine + 2 H(+). Its pathway is tRNA modification; tRNA-queuosine biosynthesis. Functionally, transfers and isomerizes the ribose moiety from AdoMet to the 7-aminomethyl group of 7-deazaguanine (preQ1-tRNA) to give epoxyqueuosine (oQ-tRNA). The chain is S-adenosylmethionine:tRNA ribosyltransferase-isomerase from Paraburkholderia phymatum (strain DSM 17167 / CIP 108236 / LMG 21445 / STM815) (Burkholderia phymatum).